A 488-amino-acid polypeptide reads, in one-letter code: Annexin A7 (488 aa).

The span at 1–18 (MSYPGYPPTGYPPFPGYP) shows a compositional bias: pro residues. 2 disordered regions span residues 1–49 (MSYP…YPQV) and 71–143 (GYPG…PTYP). Positions 1 to 143 (MSYPGYPPTG…QYPGGQPTYP (143 aa)) are repeat-rich region. The tract at residues 5–20 (GYPPTGYPPFPGYPPA) is 3 X 5 AA tandem repeats of G-Y-P-P-X. Positions 89 to 102 (PGQGFGVPPGGAGF) are enriched in gly residues. Annexin repeat units lie at residues 185–256 (FDAI…ALFM), 257–328 (PPTY…SMCQ), 340–412 (QMAQ…TILQ), and 416–487 (NRPA…AIVG). The residue at position 233 (Lys-233) is an N6-acetyllysine.

The protein belongs to the annexin family. As to quaternary structure, interacts with PDCD6. Isoform 1 is expressed in brain, heart and skeletal muscle. Isoform 2 is more abundant in liver, lung, kidney, spleen, fibroblasts and placenta.

In terms of biological role, calcium/phospholipid-binding protein which promotes membrane fusion and is involved in exocytosis. The polypeptide is Annexin A7 (ANXA7) (Homo sapiens (Human)).